A 546-amino-acid chain; its full sequence is Chaperonin GroEL (546 aa).

ATP is bound by residues 30-33 (TLGP), Lys51, 87-91 (DGTTT), Gly415, and Asp495.

It belongs to the chaperonin (HSP60) family. In terms of assembly, forms a cylinder of 14 subunits composed of two heptameric rings stacked back-to-back. Interacts with the co-chaperonin GroES.

The protein localises to the cytoplasm. It carries out the reaction ATP + H2O + a folded polypeptide = ADP + phosphate + an unfolded polypeptide.. Functionally, together with its co-chaperonin GroES, plays an essential role in assisting protein folding. The GroEL-GroES system forms a nano-cage that allows encapsulation of the non-native substrate proteins and provides a physical environment optimized to promote and accelerate protein folding. In Brucella melitensis biotype 2 (strain ATCC 23457), this protein is Chaperonin GroEL.